The chain runs to 39 residues: Large ribosomal subunit protein bL36 (39 aa).

Belongs to the bacterial ribosomal protein bL36 family.

The polypeptide is Large ribosomal subunit protein bL36 (Limosilactobacillus reuteri (strain DSM 20016) (Lactobacillus reuteri)).